The following is a 566-amino-acid chain: MDVENLIITTLKDKVKELTGTEMDIRLEEPPAINMGDYSTNISFRLAKDLKKAPKMIAEDIANSLSISGIERIEAVNGYINFFMNYPDFSKETVSKITSEKENFGKLEKRGEKVILEHTSANPNGPFHIGHGRNMVIGDSLKRILIASGYDVETQYYVNDMGRQEAIVVFGNERFELDKSKKADHAIGEVYVETNKLLAENEELEQEILNLMKNYESACEAGIENELTEKFKNAVDYSLGGFKETLSTLNIYHDKFVWESEFVKSGMVRDVIKRLMDTGKVVEDEVFRLDLSDYGLEKKLVLARLNGTSLYSTRDIAYHINKMENCDFAVNLLGADHKLTAVLVNKTLALLGYNEAEVVFYEFISLPEGSMSTRRGRFISMDELFEEAKSRAAEEVRKRGVAQSEEEIEEIAKKIAVGAVRYNIVRIAPEKPMVFRWDEALDFEKVGCPVIQYAHARCSRILENVENISNDNLFAYEMNENEKTIVKLLSKLPKIVEKAAEVRKPQIVANYVLDVAQGFNKFYANCPVLKEENETIKNSRLAIVSTTKTVLENTLDLLGIEMPGKM.

The 'HIGH' region motif lies at 121 to 131 (ANPNGPFHIGH).

This sequence belongs to the class-I aminoacyl-tRNA synthetase family.

The protein resides in the cytoplasm. It catalyses the reaction tRNA(Arg) + L-arginine + ATP = L-arginyl-tRNA(Arg) + AMP + diphosphate. The polypeptide is Arginine--tRNA ligase (Methanococcus maripaludis (strain C6 / ATCC BAA-1332)).